A 407-amino-acid polypeptide reads, in one-letter code: Naringenin 8-dimethylallyltransferase 2, chloroplastic (407 aa).

A chloroplast-targeting transit peptide spans 1 to 23; the sequence is MGFVLPASFPGASSITTGGSCLR. The next 8 membrane-spanning stretches (helical) occupy residues 117 to 137, 145 to 165, 206 to 226, 248 to 268, 285 to 305, 328 to 348, 352 to 372, and 383 to 403; these read FCRP…SLVA, SLAF…IHIF, ILGL…TVFI, VLTA…GFFL, LIFC…FKDI, VFWI…LVGA, ILWS…VLWY, and VVLQ…YCLI.

The protein belongs to the UbiA prenyltransferase family. The cofactor is Mg(2+). Mn(2+) serves as cofactor.

The protein localises to the plastid. It localises to the chloroplast membrane. It catalyses the reaction (2S)-naringenin + dimethylallyl diphosphate = sophoraflavanone B + diphosphate. Functionally, involved in the biosynthesis of sophoraflavanone G (SFG). Can use flavanones (naringenin, liquiritigenin and hesperetin) as substrates, but not flavonols or isoflavones. Shows a strict specificity for dimethylallyl diphosphate. This chain is Naringenin 8-dimethylallyltransferase 2, chloroplastic (N8DT-2), found in Sophora flavescens (Shrubby sophora).